The chain runs to 259 residues: Proteasome subunit alpha (259 aa).

It belongs to the peptidase T1A family. The 20S proteasome core is composed of 14 alpha and 14 beta subunits that assemble into four stacked heptameric rings, resulting in a barrel-shaped structure. The two inner rings, each composed of seven catalytic beta subunits, are sandwiched by two outer rings, each composed of seven alpha subunits. The catalytic chamber with the active sites is on the inside of the barrel. Has a gated structure, the ends of the cylinder being occluded by the N-termini of the alpha-subunits. Is capped at one or both ends by the proteasome regulatory ATPase, PAN.

The protein resides in the cytoplasm. With respect to regulation, the formation of the proteasomal ATPase PAN-20S proteasome complex, via the docking of the C-termini of PAN into the intersubunit pockets in the alpha-rings, triggers opening of the gate for substrate entry. Interconversion between the open-gate and close-gate conformations leads to a dynamic regulation of the 20S proteasome proteolysis activity. Functionally, component of the proteasome core, a large protease complex with broad specificity involved in protein degradation. In Methanococcus vannielii (strain ATCC 35089 / DSM 1224 / JCM 13029 / OCM 148 / SB), this protein is Proteasome subunit alpha.